We begin with the raw amino-acid sequence, 1316 residues long: DNA-directed RNA polymerase subunit beta' (1316 aa).

Zn(2+) contacts are provided by cysteine 60, cysteine 62, cysteine 75, and cysteine 78. 3 residues coordinate Mg(2+): aspartate 535, aspartate 537, and aspartate 539. 4 residues coordinate Zn(2+): cysteine 891, cysteine 968, cysteine 975, and cysteine 978.

This sequence belongs to the RNA polymerase beta' chain family. As to quaternary structure, the RNAP catalytic core consists of 2 alpha, 1 beta, 1 beta' and 1 omega subunit. When a sigma factor is associated with the core the holoenzyme is formed, which can initiate transcription. Requires Mg(2+) as cofactor. Zn(2+) is required as a cofactor.

The catalysed reaction is RNA(n) + a ribonucleoside 5'-triphosphate = RNA(n+1) + diphosphate. Its function is as follows. DNA-dependent RNA polymerase catalyzes the transcription of DNA into RNA using the four ribonucleoside triphosphates as substrates. In Mycobacterium avium (strain 104), this protein is DNA-directed RNA polymerase subunit beta'.